The primary structure comprises 171 residues: Peptide deformylase (171 aa).

The Fe cation site is built by C91 and H133. E134 is a catalytic residue. H137 contributes to the Fe cation binding site.

The protein belongs to the polypeptide deformylase family. It depends on Fe(2+) as a cofactor.

It carries out the reaction N-terminal N-formyl-L-methionyl-[peptide] + H2O = N-terminal L-methionyl-[peptide] + formate. Functionally, removes the formyl group from the N-terminal Met of newly synthesized proteins. Requires at least a dipeptide for an efficient rate of reaction. N-terminal L-methionine is a prerequisite for activity but the enzyme has broad specificity at other positions. This chain is Peptide deformylase, found in Cronobacter sakazakii (strain ATCC BAA-894) (Enterobacter sakazakii).